We begin with the raw amino-acid sequence, 105 residues long: Small ribosomal subunit protein bS6 (105 aa).

This sequence belongs to the bacterial ribosomal protein bS6 family.

In terms of biological role, binds together with bS18 to 16S ribosomal RNA. The protein is Small ribosomal subunit protein bS6 of Lawsonia intracellularis (strain PHE/MN1-00).